The primary structure comprises 711 residues: Constitutive ornithine decarboxylase (711 aa).

At Lys-347 the chain carries N6-(pyridoxal phosphate)lysine.

The protein belongs to the Orn/Lys/Arg decarboxylase class-I family. Pyridoxal 5'-phosphate serves as cofactor.

It catalyses the reaction L-ornithine + H(+) = putrescine + CO2. The protein operates within amine and polyamine biosynthesis; putrescine biosynthesis via L-ornithine pathway; putrescine from L-ornithine: step 1/1. This chain is Constitutive ornithine decarboxylase (speC), found in Escherichia coli (strain K12).